Reading from the N-terminus, the 135-residue chain is Peptide methionine sulfoxide reductase MsrB (135 aa).

The MsrB domain maps to 13 to 135 (DADWREQLTP…NGHSMVFEPV (123 aa)). The Zn(2+) site is built by cysteine 52, cysteine 55, cysteine 101, and cysteine 104. The Nucleophile role is filled by cysteine 124.

It belongs to the MsrB Met sulfoxide reductase family. The cofactor is Zn(2+).

The enzyme catalyses L-methionyl-[protein] + [thioredoxin]-disulfide + H2O = L-methionyl-(R)-S-oxide-[protein] + [thioredoxin]-dithiol. This is Peptide methionine sulfoxide reductase MsrB from Agrobacterium fabrum (strain C58 / ATCC 33970) (Agrobacterium tumefaciens (strain C58)).